The primary structure comprises 236 residues: 7-cyano-7-deazaguanine synthase (236 aa).

7 to 17 is an ATP binding site; the sequence is CSGGLDSVTLA. The Zn(2+) site is built by Cys185, Cys193, Cys196, and Cys199.

The protein belongs to the QueC family. Zn(2+) serves as cofactor.

The catalysed reaction is 7-carboxy-7-deazaguanine + NH4(+) + ATP = 7-cyano-7-deazaguanine + ADP + phosphate + H2O + H(+). It participates in purine metabolism; 7-cyano-7-deazaguanine biosynthesis. Functionally, catalyzes the ATP-dependent conversion of 7-carboxy-7-deazaguanine (CDG) to 7-cyano-7-deazaguanine (preQ(0)). The protein is 7-cyano-7-deazaguanine synthase of Rhizobium johnstonii (strain DSM 114642 / LMG 32736 / 3841) (Rhizobium leguminosarum bv. viciae).